Here is a 191-residue protein sequence, read N- to C-terminus: Protein Ves (191 aa).

It belongs to the Ves family.

This Escherichia coli O139:H28 (strain E24377A / ETEC) protein is Protein Ves.